The chain runs to 43 residues: Iota-conotoxin-like Fi11.6 (43 aa).

4 disulfides stabilise this stretch: Cys2–Cys16, Cys9–Cys19, Cys15–Cys24, and Cys18–Cys35. Residue Pro8 is modified to 4-hydroxyproline. The residue at position 26 (Pro26) is a 4-hydroxyproline. A 6'-bromotryptophan modification is found at Trp30. At Phe41 the chain carries D-phenylalanine.

The protein belongs to the conotoxin I1 superfamily. As to expression, expressed by the venom duct.

It localises to the secreted. Iota-conotoxins bind to voltage-gated sodium channels (Nav) and act as agonists by shifting the voltage-dependence of activation to more hyperpolarized levels. Produces general excitatory symptoms. This is Iota-conotoxin-like Fi11.6 from Conus figulinus (Fig cone).